A 332-amino-acid polypeptide reads, in one-letter code: Tryptophan--tRNA ligase (332 aa).

ATP contacts are provided by residues 11–13 (QPS) and 19–20 (GN). The 'HIGH' region signature appears at 12–20 (PSGELTIGN). Asp135 serves as a coordination point for L-tryptophan. ATP contacts are provided by residues 147–149 (GQD), Val186, and 195–199 (KMSKS). Positions 195–199 (KMSKS) match the 'KMSKS' region motif.

It belongs to the class-I aminoacyl-tRNA synthetase family. In terms of assembly, homodimer.

It is found in the cytoplasm. The catalysed reaction is tRNA(Trp) + L-tryptophan + ATP = L-tryptophyl-tRNA(Trp) + AMP + diphosphate + H(+). Its function is as follows. Catalyzes the attachment of tryptophan to tRNA(Trp). In Shewanella oneidensis (strain ATCC 700550 / JCM 31522 / CIP 106686 / LMG 19005 / NCIMB 14063 / MR-1), this protein is Tryptophan--tRNA ligase.